A 176-amino-acid chain; its full sequence is Lipoprotein signal peptidase (176 aa).

The next 4 membrane-spanning stretches (helical) occupy residues 10 to 30 (LFQF…AIVL), 48 to 68 (VPVL…AFSF), 78 to 98 (YFFT…LLRM), and 102 to 122 (MVVL…NLID). Catalysis depends on residues D131 and D149. Residues 141 to 161 (HFPAFNIADSAITLGTILLLI) form a helical membrane-spanning segment.

It belongs to the peptidase A8 family.

It localises to the cell inner membrane. It catalyses the reaction Release of signal peptides from bacterial membrane prolipoproteins. Hydrolyzes -Xaa-Yaa-Zaa-|-(S,diacylglyceryl)Cys-, in which Xaa is hydrophobic (preferably Leu), and Yaa (Ala or Ser) and Zaa (Gly or Ala) have small, neutral side chains.. Its pathway is protein modification; lipoprotein biosynthesis (signal peptide cleavage). This protein specifically catalyzes the removal of signal peptides from prolipoproteins. The sequence is that of Lipoprotein signal peptidase from Acinetobacter baumannii (strain ATCC 17978 / DSM 105126 / CIP 53.77 / LMG 1025 / NCDC KC755 / 5377).